The following is a 304-amino-acid chain: MEKDELTYHVPVLLKESVDGMNIHPDGTYVDVTFGGAGHSREILSRLGEGGRLLGFDQDEDAERNIVNDPHFTFVRSNFRYLQNFLRYHDIEQVDAILADLGVSSHHFDDSERGFSFRFDGALDMRMNKRAGLTAADIVNTYEEERLANIFYLYGELKNSRKLASAIVKARNGQSIRTIGEFLEIIKPLFGREREKKELAKVFQALRIEVNQEMEALKEMLAAATEALKPGGRLVVITYHSLEDRMVKNIMKTGNVEGKAETDFFGNLQTPFRLVNNKVIVPDEAEIERNPRSRSAKLRIAEKK.

S-adenosyl-L-methionine is bound by residues 37–39 (AGH), Asp-57, Phe-79, Asp-100, and His-107.

Belongs to the methyltransferase superfamily. RsmH family.

The protein resides in the cytoplasm. The enzyme catalyses cytidine(1402) in 16S rRNA + S-adenosyl-L-methionine = N(4)-methylcytidine(1402) in 16S rRNA + S-adenosyl-L-homocysteine + H(+). Specifically methylates the N4 position of cytidine in position 1402 (C1402) of 16S rRNA. The sequence is that of Ribosomal RNA small subunit methyltransferase H from Bacteroides thetaiotaomicron (strain ATCC 29148 / DSM 2079 / JCM 5827 / CCUG 10774 / NCTC 10582 / VPI-5482 / E50).